Here is a 21-residue protein sequence, read N- to C-terminus: Nigrocin-2HSa (21 aa).

Cysteine 15 and cysteine 21 are disulfide-bonded.

Expressed by the skin glands.

It is found in the secreted. Functionally, has antibacterial activity against the Gram-positive bacterium S.aureus ATCC 25923 (MIC=56 uM) and the Gram-negative bacterium E.coli ATCC 25726 (MIC=28 uM). In Odorrana hosii (Hose's rock frog), this protein is Nigrocin-2HSa.